Consider the following 262-residue polypeptide: Hydroxyethylthiazole kinase (262 aa).

Methionine 41 contributes to the substrate binding site. Positions 117 and 163 each coordinate ATP. A substrate-binding site is contributed by glycine 190.

The protein belongs to the Thz kinase family. The cofactor is Mg(2+).

The enzyme catalyses 5-(2-hydroxyethyl)-4-methylthiazole + ATP = 4-methyl-5-(2-phosphooxyethyl)-thiazole + ADP + H(+). The protein operates within cofactor biosynthesis; thiamine diphosphate biosynthesis; 4-methyl-5-(2-phosphoethyl)-thiazole from 5-(2-hydroxyethyl)-4-methylthiazole: step 1/1. Functionally, catalyzes the phosphorylation of the hydroxyl group of 4-methyl-5-beta-hydroxyethylthiazole (THZ). The sequence is that of Hydroxyethylthiazole kinase from Levilactobacillus brevis (strain ATCC 367 / BCRC 12310 / CIP 105137 / JCM 1170 / LMG 11437 / NCIMB 947 / NCTC 947) (Lactobacillus brevis).